A 130-amino-acid polypeptide reads, in one-letter code: Small ribosomal subunit protein uS8 (130 aa).

The protein belongs to the universal ribosomal protein uS8 family. Part of the 30S ribosomal subunit. Contacts proteins S5 and S12.

Its function is as follows. One of the primary rRNA binding proteins, it binds directly to 16S rRNA central domain where it helps coordinate assembly of the platform of the 30S subunit. The protein is Small ribosomal subunit protein uS8 of Glaesserella parasuis serovar 5 (strain SH0165) (Haemophilus parasuis).